Consider the following 232-residue polypeptide: Aspartate racemase (232 aa).

Residue 49–51 (DRT) participates in substrate binding. Residue Cys84 is the Proton donor/acceptor of the active site. Substrate-binding positions include 85-87 (NTA) and Lys166. The active-site Proton donor/acceptor is the Cys195.

This sequence belongs to the aspartate/glutamate racemases family.

The catalysed reaction is L-aspartate = D-aspartate. This is Aspartate racemase from Thermococcus sp. (strain KS-8).